Consider the following 98-residue polypeptide: Small ribosomal subunit protein uS19 (98 aa).

The disordered stretch occupies residues 77-98 (TRTYRGHAGGKAEKGGSAPKRK).

The protein belongs to the universal ribosomal protein uS19 family.

Its function is as follows. Protein S19 forms a complex with S13 that binds strongly to the 16S ribosomal RNA. In Prosthecochloris aestuarii (strain DSM 271 / SK 413), this protein is Small ribosomal subunit protein uS19.